Here is a 282-residue protein sequence, read N- to C-terminus: Dihydroorotate dehydrogenase B (NAD(+)), electron transfer subunit homolog (282 aa).

One can recognise an FAD-binding FR-type domain in the interval 2–100 (GGTALNEIVK…VGPLGNPSEI (99 aa)). [2Fe-2S] cluster contacts are provided by cysteine 225, cysteine 228, and cysteine 240.

Belongs to the PyrK family. [2Fe-2S] cluster serves as cofactor. FAD is required as a cofactor.

This Thermotoga maritima (strain ATCC 43589 / DSM 3109 / JCM 10099 / NBRC 100826 / MSB8) protein is Dihydroorotate dehydrogenase B (NAD(+)), electron transfer subunit homolog.